We begin with the raw amino-acid sequence, 416 residues long: Enterobactin exporter EntS (416 aa).

The Cytoplasmic segment spans residues 1 to 21; it reads MNKQSWLLNLSLLKTHPAFRA. The chain crosses the membrane as a helical span at residues 22-42; the sequence is VFLARFISIVSLGLLGVAVPV. The Periplasmic segment spans residues 43 to 55; sequence QIQMMTHSTWQVG. Residues 56–76 form a helical membrane-spanning segment; sequence LSVTLTGGAMFVGLMVGGVLA. The Cytoplasmic segment spans residues 77–83; sequence DRYERKK. Residues 84 to 104 form a helical membrane-spanning segment; that stretch reads VILLARGTCGIGFIGLCLNAL. The Periplasmic segment spans residues 105-109; that stretch reads LPEPS. The chain crosses the membrane as a helical span at residues 110–130; the sequence is LLAIYLLGLWDGFFASLGVTA. The Cytoplasmic portion of the chain corresponds to 131–156; it reads LLAATPALVGRENLMQAGAITMLTVR. A helical transmembrane segment spans residues 157–177; that stretch reads LGSVNSPMIGGLLLAIGGVAW. Asn178 is a topological domain (periplasmic). A helical transmembrane segment spans residues 179–199; that stretch reads YGLAAAGTFITLLPLLSLPAL. Topologically, residues 200-218 are cytoplasmic; that stretch reads PPPPQPREHPLKSLLAGFR. The chain crosses the membrane as a helical span at residues 219–239; it reads FLLASPLVGGIALLGGLLTMA. Topologically, residues 240–256 are periplasmic; that stretch reads SAVRVLYPALADNWQMS. The helical transmembrane segment at 257–277 threads the bilayer; that stretch reads AAQIGFLYAAIPLGAAIGALT. Residues 278 to 287 lie on the Cytoplasmic side of the membrane; the sequence is SGKLAHSARP. The helical transmembrane segment at 288 to 307 threads the bilayer; the sequence is GLLMLLSTLGSFLAIGLFGL. At 308–313 the chain is on the periplasmic side; that stretch reads MPMWIL. A helical membrane pass occupies residues 314–336; sequence GVVCLALFGWLSAVSSLLQYTML. The Cytoplasmic portion of the chain corresponds to 337-356; sequence QTQTPEVMLGRINGLWTAQN. Residues 357–377 traverse the membrane as a helical segment; the sequence is VTGDAIGAALLGGLGAMMTPV. Position 378 (Ala378) is a topological domain, periplasmic. Residues 379–399 traverse the membrane as a helical segment; the sequence is SASASGFGLLIIGVLLLLVLV. Over 400-416 the chain is Cytoplasmic; sequence ELRHFRQTPPQVTASDS.

It belongs to the major facilitator superfamily. EntS (TC 2.A.1.38) family.

The protein resides in the cell inner membrane. Its function is as follows. Component of an export pathway for enterobactin. This chain is Enterobactin exporter EntS, found in Shigella dysenteriae serotype 1 (strain Sd197).